We begin with the raw amino-acid sequence, 361 residues long: Very-long-chain 3-oxoacyl-CoA reductase (361 aa).

A helical membrane pass occupies residues Pro-32–Phe-52. 8 residues coordinate NADP(+): Val-79, Asp-133, Asn-163, Arg-198, Tyr-236, Lys-240, Val-269, and Ser-271. The Proton donor role is filled by Tyr-236. Lys-240 acts as the Lowers pKa of active site Tyr in catalysis.

This sequence belongs to the short-chain dehydrogenases/reductases (SDR) family.

It is found in the endoplasmic reticulum membrane. It carries out the reaction a very-long-chain (3R)-3-hydroxyacyl-CoA + NADP(+) = a very-long-chain 3-oxoacyl-CoA + NADPH + H(+). The protein operates within lipid metabolism; fatty acid biosynthesis. Functionally, component of the microsomal membrane bound fatty acid elongation system, which produces the 26-carbon very long-chain fatty acids (VLCFA) from palmitate. Catalyzes the reduction of the 3-ketoacyl-CoA intermediate that is formed in each cycle of fatty acid elongation. VLCFAs serve as precursors for ceramide and sphingolipids. In Cryptococcus neoformans var. neoformans serotype D (strain B-3501A) (Filobasidiella neoformans), this protein is Very-long-chain 3-oxoacyl-CoA reductase.